A 288-amino-acid polypeptide reads, in one-letter code: Glutamate racemase (288 aa).

Substrate contacts are provided by residues 10–11 (DS) and 42–43 (YG). Cys73 serves as the catalytic Proton donor/acceptor. 74 to 75 (NT) contacts substrate. The active-site Proton donor/acceptor is Cys184. 185-186 (TH) provides a ligand contact to substrate.

This sequence belongs to the aspartate/glutamate racemases family.

It catalyses the reaction L-glutamate = D-glutamate. It participates in cell wall biogenesis; peptidoglycan biosynthesis. Its function is as follows. Provides the (R)-glutamate required for cell wall biosynthesis. The sequence is that of Glutamate racemase from Corynebacterium kroppenstedtii (strain DSM 44385 / JCM 11950 / CIP 105744 / CCUG 35717).